Reading from the N-terminus, the 124-residue chain is MKVSLVYGLTCFLDATSSALPSAMAAANSESSALEKRNDGYLVMCKNCDPNSGSCDWKQNWNTCVGIGSNVHWMVTGESNGQQGCAIIWEGSGCTGRSTTMCCPGDTCCNINTGFYIRSYRRVE.

A signal peptide spans 1–19 (MKVSLVYGLTCFLDATSSA). A propeptide spanning residues 20–37 (LPSAMAAANSESSALEKR) is cleaved from the precursor. 5 cysteine pairs are disulfide-bonded: Cys-45–Cys-55, Cys-48–Cys-108, Cys-64–Cys-94, Cys-85–Cys-102, and Cys-103–Cys-109.

As to quaternary structure, monomer.

The protein resides in the secreted. Its function is as follows. This toxin kills sensitive strains of yeast. This is Killer toxin (HSK) from Cyberlindnera saturnus (Yeast).